The following is a 243-amino-acid chain: Purine nucleoside phosphorylase YfiH (243 aa).

Positions 71, 107, and 124 each coordinate Zn(2+).

This sequence belongs to the purine nucleoside phosphorylase YfiH/LACC1 family. As to quaternary structure, homodimer. Requires Cu(2+) as cofactor. Zn(2+) is required as a cofactor.

It catalyses the reaction adenosine + phosphate = alpha-D-ribose 1-phosphate + adenine. It carries out the reaction S-methyl-5'-thioadenosine + phosphate = 5-(methylsulfanyl)-alpha-D-ribose 1-phosphate + adenine. The enzyme catalyses inosine + phosphate = alpha-D-ribose 1-phosphate + hypoxanthine. The catalysed reaction is adenosine + H2O + H(+) = inosine + NH4(+). Its function is as follows. Purine nucleoside enzyme that catalyzes the phosphorolysis of adenosine and inosine nucleosides, yielding D-ribose 1-phosphate and the respective free bases, adenine and hypoxanthine. Also catalyzes the phosphorolysis of S-methyl-5'-thioadenosine into adenine and S-methyl-5-thio-alpha-D-ribose 1-phosphate. Also has adenosine deaminase activity. May also act as a polyphenol oxidase: able to oxidize syringaldazine and 2,2'-azino-bis(3-ethylbenzthiazoline-6-sulfonic acid) (ABTS) in vitro. The polypeptide is Purine nucleoside phosphorylase YfiH (Escherichia coli (strain K12)).